Reading from the N-terminus, the 376-residue chain is Beta-centractin (376 aa).

Residue Met1 is modified to N-acetylmethionine. Tyr4 bears the 3'-nitrotyrosine mark.

This sequence belongs to the actin family. ARP1 subfamily.

It localises to the cytoplasm. It is found in the cytoskeleton. The protein resides in the microtubule organizing center. Its subcellular location is the centrosome. Functionally, component of a multi-subunit complex involved in microtubule based vesicle motility. It is associated with the centrosome. The chain is Beta-centractin (ACTR1B) from Bos taurus (Bovine).